We begin with the raw amino-acid sequence, 185 residues long: UPF0301 protein PSHAa2600 (185 aa).

Belongs to the UPF0301 (AlgH) family.

The chain is UPF0301 protein PSHAa2600 from Pseudoalteromonas translucida (strain TAC 125).